The sequence spans 191 residues: Large ribosomal subunit protein uL5 (191 aa).

This sequence belongs to the universal ribosomal protein uL5 family. As to quaternary structure, part of the 50S ribosomal subunit; part of the 5S rRNA/L5/L18/L25 subcomplex. Contacts the 5S rRNA and the P site tRNA. Forms a bridge to the 30S subunit in the 70S ribosome.

Its function is as follows. This is one of the proteins that bind and probably mediate the attachment of the 5S RNA into the large ribosomal subunit, where it forms part of the central protuberance. In the 70S ribosome it contacts protein S13 of the 30S subunit (bridge B1b), connecting the 2 subunits; this bridge is implicated in subunit movement. Contacts the P site tRNA; the 5S rRNA and some of its associated proteins might help stabilize positioning of ribosome-bound tRNAs. In Micrococcus luteus (strain ATCC 4698 / DSM 20030 / JCM 1464 / CCM 169 / CCUG 5858 / IAM 1056 / NBRC 3333 / NCIMB 9278 / NCTC 2665 / VKM Ac-2230) (Micrococcus lysodeikticus), this protein is Large ribosomal subunit protein uL5.